The primary structure comprises 137 residues: Large ribosomal subunit protein uL16 (137 aa).

Positions Met1–Gly19 are enriched in basic residues. The tract at residues Met1 to Thr20 is disordered.

The protein belongs to the universal ribosomal protein uL16 family. Part of the 50S ribosomal subunit.

Functionally, binds 23S rRNA and is also seen to make contacts with the A and possibly P site tRNAs. The chain is Large ribosomal subunit protein uL16 from Desulfosudis oleivorans (strain DSM 6200 / JCM 39069 / Hxd3) (Desulfococcus oleovorans).